A 72-amino-acid chain; its full sequence is Prokaryotic ubiquitin-like protein Pup (72 aa).

The span at 1-11 shows a compositional bias: gly residues; the sequence is MAQRDTGGGQQ. Residues 1-41 form a disordered region; sequence MAQRDTGGGQQRTGRRDDETAEAEVEESGASDLKERHEKLS. A compositionally biased stretch (acidic residues) spans 19–29; the sequence is ETAEAEVEESG. Residues 22-61 adopt a coiled-coil conformation; sequence EAEVEESGASDLKERHEKLSEDVDSLLDEIDDVLEENAEE. The tract at residues 28 to 66 is ARC ATPase binding; that stretch reads SGASDLKERHEKLSEDVDSLLDEIDDVLEENAEEFVKGY. Over residues 32 to 41 the composition is skewed to basic and acidic residues; the sequence is DLKERHEKLS. At glutamine 72 the chain carries Deamidated glutamine. Glutamine 72 participates in a covalent cross-link: Isoglutamyl lysine isopeptide (Gln-Lys) (interchain with K-? in acceptor proteins).

It belongs to the prokaryotic ubiquitin-like protein family. As to quaternary structure, strongly interacts with the proteasome-associated ATPase ARC through a hydrophobic interface; the interacting region of Pup lies in its C-terminal half. There is one Pup binding site per ARC hexamer ring. Post-translationally, is modified by deamidation of its C-terminal glutamine to glutamate by the deamidase Dop, a prerequisite to the subsequent pupylation process.

It participates in protein degradation; proteasomal Pup-dependent pathway. In terms of biological role, protein modifier that is covalently attached to lysine residues of substrate proteins, thereby targeting them for proteasomal degradation. The tagging system is termed pupylation. This is Prokaryotic ubiquitin-like protein Pup from Parafrankia sp. (strain EAN1pec).